The sequence spans 81 residues: Acyl carrier protein (81 aa).

Residues 2-80 (ASNEEILAGL…DAVSFIANAQ (79 aa)) enclose the Carrier domain. Ser-40 carries the O-(pantetheine 4'-phosphoryl)serine modification.

Belongs to the acyl carrier protein (ACP) family. 4'-phosphopantetheine is transferred from CoA to a specific serine of apo-ACP by AcpS. This modification is essential for activity because fatty acids are bound in thioester linkage to the sulfhydryl of the prosthetic group.

It is found in the cytoplasm. It functions in the pathway lipid metabolism; fatty acid biosynthesis. Carrier of the growing fatty acid chain in fatty acid biosynthesis. This Paenarthrobacter aurescens (strain TC1) protein is Acyl carrier protein.